Consider the following 613-residue polypeptide: Isocitrate dehydrogenase kinase/phosphatase (613 aa).

Residues 328-334 and Lys349 contribute to the ATP site; that span reads APGIRGL. The active site involves Asp384.

This sequence belongs to the AceK family.

Its subcellular location is the cytoplasm. It catalyses the reaction L-seryl-[isocitrate dehydrogenase] + ATP = O-phospho-L-seryl-[isocitrate dehydrogenase] + ADP + H(+). Functionally, bifunctional enzyme which can phosphorylate or dephosphorylate isocitrate dehydrogenase (IDH) on a specific serine residue. This is a regulatory mechanism which enables bacteria to bypass the Krebs cycle via the glyoxylate shunt in response to the source of carbon. When bacteria are grown on glucose, IDH is fully active and unphosphorylated, but when grown on acetate or ethanol, the activity of IDH declines drastically concomitant with its phosphorylation. The polypeptide is Isocitrate dehydrogenase kinase/phosphatase (Cupriavidus necator (strain ATCC 17699 / DSM 428 / KCTC 22496 / NCIMB 10442 / H16 / Stanier 337) (Ralstonia eutropha)).